The chain runs to 1825 residues: MESDAGAQQPPEASENSNMYGGYQTETESDPLVYKSDNNHNPGSTNLDGPNSIVAQTEPNAVSERRTSVLQQADDVLPRHSSIDDAIASVARQSAGFSEDFLRRDSRVSASHSSHNEAGHHADSEQLETRLPVPENVQEHNNVSNTENHESTGAPADDSFFSELASRPETSEQFFSTHAQEEITPLVDPLQEVDERRESFPWEESKEGADFFSSLGNSEHNQTPASGTEEHEQSHVSTSFNEEETAITHGNEESIPWPSYDENSHEAHAQHTSEGAQETDSVAPSAHTVHESDSTPTPKPDSTNELDELFAGDDDDFLQEIVKDQEPVTSNGNQDTKTPSSQEPEPAEESQVKKKDSFAFLELDDDLLLDDDLLPDEEDEGEINSNATVVQPQTTTTSRYSRPSQPTSTSSSFSKPVAAQEFNKKLEEAKKKHDAYDFPSNLLHSSIKPAPRTNNKYAAPSGSAGSPNSASASAPPPSSTTSLPLHPQAAPGVAQENRPPLQSHSSAPNQAPSKSPAKKSFFEELPIPTPRAAVRPARSGPSKPSPVTAKPAVGQAQKKPTQPPVNPYAMQNLKTPSAASSPASAVPQVTLPNAPVGPVPPVAPIGGVVAPGPFSDMASVAPLPQSAPQNSLSATPNTTSQPRKLSNAGSSPYVPKVGPYGPSGHTRHHSRASSLVGAKGKEVNPYAPALSPVNASGGQMSPQNQASSLSAVAPPTAHSSATASRLRRISNPRSIYGNAVAQQLKPVDPNIRFQKQFPIFNWGLNNNVSMIPKNMQRNINIKQLTGGAFTEILKSFPGPLSKKSKAKDVEKWLKTKVTHLDSSTPNVATNEAKLSDEVGEILAALVASNGDVRSQEFISTACSVLNPHHYSQVEAMATPQGSNHSATAYKLDNSGSNQLLTYCQAGQTDRALELCVAAGDWALALIISHSMGPQAFGKTASDFARTSYPFQKSQSKLNHLMPIILKVFSGNVKSIIEDFQNVATELEWVLLHWRDVVTSIAANAIQNGKVNEFLNEFGQLLASHGNFIGRDVCFILTGAPLSPSFSVVGGDSQMGLFYTEIYEYALSQRSAATANTLLPTLSVKLHHAQLLADYGLNVDSQRYCDQIGASLKTTKQQVPPAIIHEFQRLLVRVSDTGANDQSWYGGIGKINKMWGQLDKLISGDENTEKKGETGLFSKFSPSVSRNASTTDIHALDRPEFHSMVSSMSAPITPGEQYGRTPSSVAPVTSLSGVSSSQTSNPLTSVPRYAPPAKNSRPQQSPQQPTRSHDMAPHSGSRYAPSNASSSNLGNPEEAIQSRKPPSKYSRPAQVGAAFSYNNPVAEASSSSIGSYGSHAVPNPPPATQGHTKQPSFNSIVSNDYSVIRDHNRSPSVQSDISLDYPVDFRERIAESKQESEENADIKQLNEIPTNGNGNENTQAQSSKDQSSPLPYANQSGTTMDSTEVASQQSQQPPPPPPKLTQTPTQSPSRGPPPAVSRSPSQPPKANPYAPGARTNKPRGRNRYGPPSALGSNAPSVPEVNGNRASEEPKNVNPKVHEEKTSNIDDSFTSSYQEDTQMSSPSLMLNHNQGAINQTERPNSKFGLGDEFPIPGSPEVTTRANSVYGGHGGFFSSRLSQSQQSTMYQQYEVTDDTVQDYVPVVEEEDEEEDAPKSQSSQPAQNGSKSAANAKGQTGLFSIFGMRKNDGKPKPIRAKMGEPMKLVYDEEMKAWIDPSIPRDQQLKKAAPPPPPKMKTSAKPSNVPSVGEAPSQQHTPQTGPVLPPGNSSGPTPKPIGSGPKPPAPRAGTKPQLANANLDDLLSLSSQPGAAGRKPKRGARRGYVNVMEQ.

Disordered regions lie at residues 1 to 67, 106 to 356, 371 to 590, 620 to 675, 687 to 726, 1165 to 1188, 1206 to 1308, 1322 to 1353, 1387 to 1696, and 1712 to 1825; these read MESD…ERRT, SRVS…KKKD, DDLL…PQVT, VAPL…ASSL, APALSPVNASGGQMSPQNQASSLSAVAPPTAHSSATASRL, ENTEKKGETGLFSKFSPSVSRNAS, SMSA…SRPA, EASSSSIGSYGSHAVPNPPPATQGHTKQPSFN, RIAE…KMGE, and PSIP…VMEQ. The span at 39–60 shows a compositional bias: polar residues; that stretch reads NHNPGSTNLDGPNSIVAQTEPN. 2 stretches are compositionally biased toward basic and acidic residues: residues 114 to 128 and 193 to 209; these read SHNEAGHHADSEQLE and VDERRESFPWEESKEGA. Residues 214–226 are compositionally biased toward polar residues; sequence SLGNSEHNQTPAS. The span at 262–271 shows a compositional bias: basic and acidic residues; that stretch reads ENSHEAHAQH. Polar residues-rich tracts occupy residues 272-282 and 294-303; these read TSEGAQETDSV and STPTPKPDST. Over residues 304–318 the composition is skewed to acidic residues; that stretch reads NELDELFAGDDDDFL. A compositionally biased stretch (polar residues) spans 327 to 338; the sequence is PVTSNGNQDTKT. Positions 371–382 are enriched in acidic residues; that stretch reads DDLLPDEEDEGE. Residues 391-412 show a composition bias toward low complexity; sequence QPQTTTTSRYSRPSQPTSTSSS. Over residues 422–436 the composition is skewed to basic and acidic residues; that stretch reads FNKKLEEAKKKHDAY. Positions 458-485 are enriched in low complexity; sequence AAPSGSAGSPNSASASAPPPSSTTSLPL. Residues 500-513 are compositionally biased toward polar residues; it reads PLQSHSSAPNQAPS. Residues 576–585 show a composition bias toward low complexity; sequence PSAASSPASA. Composition is skewed to polar residues over residues 626-650 and 693-709; these read SAPQNSLSATPNTTSQPRKLSNAGS and VNASGGQMSPQNQASSL. Low complexity predominate over residues 710-724; that stretch reads SAVAPPTAHSSATAS. Polar residues predominate over residues 1179-1188; it reads FSPSVSRNAS. 2 stretches are compositionally biased toward low complexity: residues 1227-1239 and 1255-1265; these read VTSLSGVSSSQTS and SRPQQSPQQPT. Positions 1279-1289 are enriched in polar residues; sequence APSNASSSNLG. Residues 1324-1333 show a composition bias toward low complexity; sequence SSSSIGSYGS. Polar residues-rich tracts occupy residues 1344–1353 and 1406–1445; these read QGHTKQPSFN and EIPTNGNGNENTQAQSSKDQSSPLPYANQSGTTMDSTEVA. Residues 1459–1468 are compositionally biased toward low complexity; that stretch reads LTQTPTQSPS. Residues 1469 to 1485 show a composition bias toward pro residues; it reads RGPPPAVSRSPSQPPKA. A compositionally biased stretch (basic and acidic residues) spans 1524 to 1542; it reads ASEEPKNVNPKVHEEKTSN. Residues 1543–1576 show a composition bias toward polar residues; that stretch reads IDDSFTSSYQEDTQMSSPSLMLNHNQGAINQTER. The segment covering 1611 to 1620 has biased composition (low complexity); that stretch reads SSRLSQSQQS. Residues 1651–1674 are compositionally biased toward polar residues; sequence KSQSSQPAQNGSKSAANAKGQTGL. A compositionally biased stretch (basic and acidic residues) spans 1681-1696; that stretch reads RKNDGKPKPIRAKMGE. Positions 1789-1808 are enriched in low complexity; that stretch reads LANANLDDLLSLSSQPGAAG.

This sequence belongs to the SEC16 family.

Its subcellular location is the endoplasmic reticulum membrane. In terms of biological role, involved in the initiation of assembly of the COPII coat required for the formation of transport vesicles from the endoplasmic reticulum (ER) and the selection of cargo molecules. Also involved in autophagy. In Meyerozyma guilliermondii (strain ATCC 6260 / CBS 566 / DSM 6381 / JCM 1539 / NBRC 10279 / NRRL Y-324) (Yeast), this protein is COPII coat assembly protein SEC16 (SEC16).